The chain runs to 234 residues: Probable transcriptional regulatory protein PSPTO_3162 (234 aa).

It belongs to the TACO1 family.

It localises to the cytoplasm. This Pseudomonas syringae pv. tomato (strain ATCC BAA-871 / DC3000) protein is Probable transcriptional regulatory protein PSPTO_3162.